A 380-amino-acid polypeptide reads, in one-letter code: tRNA-specific 2-thiouridylase MnmA (380 aa).

Residues 26 to 33 (AMSGGVDS) and Leu52 contribute to the ATP site. Cys120 (nucleophile) is an active-site residue. An intrachain disulfide couples Cys120 to Cys217. ATP is bound at residue Gly144. The segment at 166–168 (RDQ) is interaction with tRNA. Cys217 functions as the Cysteine persulfide intermediate in the catalytic mechanism.

It belongs to the MnmA/TRMU family.

It is found in the cytoplasm. It catalyses the reaction S-sulfanyl-L-cysteinyl-[protein] + uridine(34) in tRNA + AH2 + ATP = 2-thiouridine(34) in tRNA + L-cysteinyl-[protein] + A + AMP + diphosphate + H(+). In terms of biological role, catalyzes the 2-thiolation of uridine at the wobble position (U34) of tRNA, leading to the formation of s(2)U34. This Roseobacter denitrificans (strain ATCC 33942 / OCh 114) (Erythrobacter sp. (strain OCh 114)) protein is tRNA-specific 2-thiouridylase MnmA.